A 314-amino-acid polypeptide reads, in one-letter code: MAVNGTALLLANVTYITVEILIGLCAIVGNVLVIWVVKLNPSLQTTTFYFIVSLALADIAVGVLVMPLAIVISLGITIQFYNCLFMTCLLLIFTHASIMSLLAIAVDRYLRVKLTVRYRRVTTQRRIWLALGLCWLVSFLVGLTPMFGWNMKLTSEHQRNVTFLSCQFSSVMRMDYMVYFSFFTWILIPLVVMCAIYLDIFYVIRNKLNQNFSSSKETGAFYGREFKTAKSLFLVLFLFAFSWLPLSIINCITYFHGEVPQIILYLGILLSHANSMMNPIVYAYKIKKFKETYLLIFKTYMICQSSDSLDSSTE.

At 1 to 14 (MAVNGTALLLANVT) the chain is on the extracellular side. 2 N-linked (GlcNAc...) asparagine glycosylation sites follow: N4 and N12. Residues 15-37 (YITVEILIGLCAIVGNVLVIWVV) form a helical membrane-spanning segment. Over 38 to 48 (KLNPSLQTTTF) the chain is Cytoplasmic. A helical transmembrane segment spans residues 49-72 (YFIVSLALADIAVGVLVMPLAIVI). The Extracellular segment spans residues 73–84 (SLGITIQFYNCL). Cysteines 83 and 166 form a disulfide. Residues 85-106 (FMTCLLLIFTHASIMSLLAIAV) form a helical membrane-spanning segment. Topologically, residues 107–126 (DRYLRVKLTVRYRRVTTQRR) are cytoplasmic. The chain crosses the membrane as a helical span at residues 127–148 (IWLALGLCWLVSFLVGLTPMFG). Residues 149 to 177 (WNMKLTSEHQRNVTFLSCQFSSVMRMDYM) are Extracellular-facing. An N-linked (GlcNAc...) asparagine glycan is attached at N160. A helical membrane pass occupies residues 178 to 198 (VYFSFFTWILIPLVVMCAIYL). Topologically, residues 199–231 (DIFYVIRNKLNQNFSSSKETGAFYGREFKTAKS) are cytoplasmic. The helical transmembrane segment at 232–255 (LFLVLFLFAFSWLPLSIINCITYF) threads the bilayer. The Extracellular portion of the chain corresponds to 256–261 (HGEVPQ). Residues 262 to 284 (IILYLGILLSHANSMMNPIVYAY) form a helical membrane-spanning segment. Over 285–314 (KIKKFKETYLLIFKTYMICQSSDSLDSSTE) the chain is Cytoplasmic. A lipid anchor (S-palmitoyl cysteine) is attached at C303.

Belongs to the G-protein coupled receptor 1 family.

It localises to the cell membrane. In terms of biological role, receptor for adenosine. The activity of this receptor is mediated by G proteins which inhibits adenylyl cyclase. The chain is Adenosine receptor A3 (ADORA3) from Canis lupus familiaris (Dog).